Here is a 341-residue protein sequence, read N- to C-terminus: Ribulose-5-phosphate reductase 2 (341 aa).

Zn(2+) contacts are provided by Cys-38, His-64, Glu-65, and Glu-144.

Belongs to the zinc-containing alcohol dehydrogenase family. In terms of assembly, heterodimer together with TarI. Zn(2+) serves as cofactor.

It catalyses the reaction D-ribitol 5-phosphate + NADP(+) = D-ribulose 5-phosphate + NADPH + H(+). The protein operates within cell wall biogenesis; poly(ribitol phosphate) teichoic acid biosynthesis. Functionally, catalyzes the NADPH dependent reduction of D-ribulose 5-phosphate to D-ribitol 5-phosphate. This Staphylococcus aureus (strain NCTC 8325 / PS 47) protein is Ribulose-5-phosphate reductase 2.